We begin with the raw amino-acid sequence, 558 residues long: Type I restriction enzyme MjaIX methylase subunit (558 aa).

A disordered region spans residues 1–37 (MATLDKFLSIKENDEKTKKKESKKKSSKSNKTSESLV). The segment covering 8 to 18 (LSIKENDEKTK) has biased composition (basic and acidic residues). Residues 19-28 (KKESKKKSSK) are compositionally biased toward basic residues. S-adenosyl-L-methionine is bound by residues 227-232 (KFYTPR), 256-258 (SGG), and Asp283.

Belongs to the N(4)/N(6)-methyltransferase family. The type I restriction/modification system is composed of three polypeptides R, M and S.

The catalysed reaction is a 2'-deoxyadenosine in DNA + S-adenosyl-L-methionine = an N(6)-methyl-2'-deoxyadenosine in DNA + S-adenosyl-L-homocysteine + H(+). Its function is as follows. The subtype gamma methyltransferase (M) subunit of a type I restriction enzyme. The M and S subunits together form a methyltransferase (MTase) that methylates A-3 on the top and A-2 on the bottom strand of the sequence 5'-CCAN(5)GTR-3'. In the presence of the R subunit the complex can also act as an endonuclease, binding to the same target sequence but cutting the DNA some distance from this site. Whether the DNA is cut or modified depends on the methylation state of the target sequence. When the target site is unmodified, the DNA is cut. When the target site is hemimethylated, the complex acts as a maintenance MTase modifying the DNA so that both strands become methylated. After locating a non-methylated recognition site, the enzyme complex serves as a molecular motor that translocates DNA in an ATP-dependent manner until a collision occurs that triggers cleavage. In Methanocaldococcus jannaschii (strain ATCC 43067 / DSM 2661 / JAL-1 / JCM 10045 / NBRC 100440) (Methanococcus jannaschii), this protein is Type I restriction enzyme MjaIX methylase subunit.